The following is a 115-amino-acid chain: Promotilin (115 aa).

The signal sequence occupies residues 1-25; sequence MVSRKAVAALLVVHAPAMLASQTEA. Positions 40–74 are disordered; that stretch reads EKERSKGQKKSLSVWQRSGEEGPVDPAEPIEEEGN.

This sequence belongs to the motilin family.

It localises to the secreted. In terms of biological role, plays an important role in the regulation of interdigestive gastrointestinal motility and indirectly causes rhythmic contraction of duodenal and colonic smooth muscle. In Macaca mulatta (Rhesus macaque), this protein is Promotilin (MLN).